A 232-amino-acid chain; its full sequence is Beta-casein (232 aa).

The first 15 residues, 1-15 (MKLLILACFVALALA), serve as a signal peptide directing secretion. N22 carries N-linked (GlcNAc...) asparagine glycosylation. S24 carries the post-translational modification Phosphoserine. The residue at position 27 (T27) is a Phosphothreonine. S30, S32, S33, and S34 each carry phosphoserine. Positions 48–63 (KLKREEQQQTENERQN) are enriched in basic and acidic residues. A disordered region spans residues 48-74 (KLKREEQQQTENERQNKIHQFPQPQPL).

The protein belongs to the beta-casein family. In terms of tissue distribution, mammary gland specific. Secreted in milk.

It is found in the secreted. Its function is as follows. Important role in determination of the surface properties of the casein micelles. This is Beta-casein (CSN2) from Sus scrofa (Pig).